A 369-amino-acid polypeptide reads, in one-letter code: Anhydro-N-acetylmuramic acid kinase (369 aa).

12–19 (GTSLDGVD) lines the ATP pocket.

The protein belongs to the anhydro-N-acetylmuramic acid kinase family.

The enzyme catalyses 1,6-anhydro-N-acetyl-beta-muramate + ATP + H2O = N-acetyl-D-muramate 6-phosphate + ADP + H(+). Its pathway is amino-sugar metabolism; 1,6-anhydro-N-acetylmuramate degradation. The protein operates within cell wall biogenesis; peptidoglycan recycling. Functionally, catalyzes the specific phosphorylation of 1,6-anhydro-N-acetylmuramic acid (anhMurNAc) with the simultaneous cleavage of the 1,6-anhydro ring, generating MurNAc-6-P. Is required for the utilization of anhMurNAc either imported from the medium or derived from its own cell wall murein, and thus plays a role in cell wall recycling. The sequence is that of Anhydro-N-acetylmuramic acid kinase from Actinobacillus pleuropneumoniae serotype 5b (strain L20).